The following is a 404-amino-acid chain: MNKQIQTEADELGFFGEYGGQYVPETLMPAIIELKKAYKEAKADPEFQRELEYYLSEYVGRTTPLTYAASYTESLGGAKIYLKREDLNHTGAHKINNALGQALLAKRMGKKKLVAETGAGQHGVASATVAALFDMELVVFMGSEDIKRQQLNVFRMELLGAKVVAVEDGQGTLSDAVNKALQYWVSHVDDTHYLLGSALGPDPFPTIVRDFQSVIGKEIKSQILKKEGRLPDAIVACIGGGSNAIGTFYPFIKDDVALYGVEAAGQGEDTDKHALAIGKGSPGVLHGTKMYLIQDEGGQVQLAHSISAGLDYPGIGPEHSYYHDIGRVTFENASDTQAMNALINFTKHEGTIPAIESAHALSYVERLAPTMSKEDIIVVTISGRGDKDMETIRQYMAERGLAND.

Position 94 is an N6-(pyridoxal phosphate)lysine (lysine 94).

It belongs to the TrpB family. Tetramer of two alpha and two beta chains. The cofactor is pyridoxal 5'-phosphate.

It catalyses the reaction (1S,2R)-1-C-(indol-3-yl)glycerol 3-phosphate + L-serine = D-glyceraldehyde 3-phosphate + L-tryptophan + H2O. It functions in the pathway amino-acid biosynthesis; L-tryptophan biosynthesis; L-tryptophan from chorismate: step 5/5. In terms of biological role, the beta subunit is responsible for the synthesis of L-tryptophan from indole and L-serine. The chain is Tryptophan synthase beta chain from Staphylococcus aureus (strain bovine RF122 / ET3-1).